The primary structure comprises 454 residues: UDP-N-acetylmuramate--L-alanine ligase (454 aa).

Residue 112–118 (GTHGKTT) coordinates ATP.

It belongs to the MurCDEF family.

It localises to the cytoplasm. It catalyses the reaction UDP-N-acetyl-alpha-D-muramate + L-alanine + ATP = UDP-N-acetyl-alpha-D-muramoyl-L-alanine + ADP + phosphate + H(+). The protein operates within cell wall biogenesis; peptidoglycan biosynthesis. Its function is as follows. Cell wall formation. The sequence is that of UDP-N-acetylmuramate--L-alanine ligase from Oleidesulfovibrio alaskensis (strain ATCC BAA-1058 / DSM 17464 / G20) (Desulfovibrio alaskensis).